A 306-amino-acid polypeptide reads, in one-letter code: D-alanine--D-alanine ligase (306 aa).

Catalysis depends on residues Glu18 and Ser150. One can recognise an ATP-grasp domain in the interval 104-303 (KMLWKAFGLP…FEQLVVKILE (200 aa)). 134 to 189 (VAKLGLPLMVKPSLEGSSVGLTKVKAVEELKSAVEYALKFDNTILIEEWLAGDELT) provides a ligand contact to ATP. Residues Asp257, Glu270, and Asn272 each coordinate Mg(2+). Residue Ser281 is part of the active site.

Belongs to the D-alanine--D-alanine ligase family. Requires Mg(2+) as cofactor. The cofactor is Mn(2+).

It localises to the cytoplasm. The enzyme catalyses 2 D-alanine + ATP = D-alanyl-D-alanine + ADP + phosphate + H(+). The protein operates within cell wall biogenesis; peptidoglycan biosynthesis. Functionally, cell wall formation. The polypeptide is D-alanine--D-alanine ligase (Haemophilus influenzae (strain ATCC 51907 / DSM 11121 / KW20 / Rd)).